We begin with the raw amino-acid sequence, 122 residues long: Small ribosomal subunit protein uS13 (122 aa).

The segment at 99–122 (RGQRTHTNARTRKGPAKAIAGKKK) is disordered.

This sequence belongs to the universal ribosomal protein uS13 family. As to quaternary structure, part of the 30S ribosomal subunit. Forms a loose heterodimer with protein S19. Forms two bridges to the 50S subunit in the 70S ribosome.

Its function is as follows. Located at the top of the head of the 30S subunit, it contacts several helices of the 16S rRNA. In the 70S ribosome it contacts the 23S rRNA (bridge B1a) and protein L5 of the 50S subunit (bridge B1b), connecting the 2 subunits; these bridges are implicated in subunit movement. Contacts the tRNAs in the A and P-sites. The polypeptide is Small ribosomal subunit protein uS13 (Rhizobium etli (strain ATCC 51251 / DSM 11541 / JCM 21823 / NBRC 15573 / CFN 42)).